The chain runs to 313 residues: Ribosomal RNA small subunit methyltransferase H (313 aa).

S-adenosyl-L-methionine-binding positions include 35–37, Asp-55, Phe-79, Asp-100, and Gln-107; that span reads GGH.

Belongs to the methyltransferase superfamily. RsmH family.

It localises to the cytoplasm. The catalysed reaction is cytidine(1402) in 16S rRNA + S-adenosyl-L-methionine = N(4)-methylcytidine(1402) in 16S rRNA + S-adenosyl-L-homocysteine + H(+). Specifically methylates the N4 position of cytidine in position 1402 (C1402) of 16S rRNA. This is Ribosomal RNA small subunit methyltransferase H from Burkholderia orbicola (strain AU 1054).